A 672-amino-acid chain; its full sequence is Rho GTPase-activating protein 40 (672 aa).

The interval 43-68 (GCSPGLSTGPTNLQQHPQKPRPADCS) is disordered. Residues 47–59 (GLSTGPTNLQQHP) show a composition bias toward polar residues. The 199-residue stretch at 321–519 (VPLHSLLEAD…MMVQYQDLLW (199 aa)) folds into the Rho-GAP domain.

Its function is as follows. GTPase activator for the Rho-type GTPases by converting them to an inactive GDP-bound state. The sequence is that of Rho GTPase-activating protein 40 from Mus musculus (Mouse).